Reading from the N-terminus, the 146-residue chain is Large ribosomal subunit protein uL11 (146 aa).

Belongs to the universal ribosomal protein uL11 family. Part of the ribosomal stalk of the 50S ribosomal subunit. Interacts with L10 and the large rRNA to form the base of the stalk. L10 forms an elongated spine to which L12 dimers bind in a sequential fashion forming a multimeric L10(L12)X complex. Post-translationally, one or more lysine residues are methylated.

Functionally, forms part of the ribosomal stalk which helps the ribosome interact with GTP-bound translation factors. The protein is Large ribosomal subunit protein uL11 of Corynebacterium jeikeium (strain K411).